The following is a 78-amino-acid chain: Toxin-like protein 10 (78 aa).

The signal sequence occupies residues 1–23 (MKATALLIAVFILFSVFGDMGYC).

Contains 4 disulfide bonds. In terms of tissue distribution, expressed by the venom gland.

Its subcellular location is the secreted. This Urodacus yaschenkoi (Inland robust scorpion) protein is Toxin-like protein 10.